Here is a 697-residue protein sequence, read N- to C-terminus: Elongation factor G 2 (697 aa).

Residues 5-280 enclose the tr-type G domain; sequence SKYRNIGIFA…AVVDYLPAPD (276 aa). GTP contacts are provided by residues 14-21, 78-82, and 132-135; these read AHVDAGKT, DTPGH, and NKLD.

It belongs to the TRAFAC class translation factor GTPase superfamily. Classic translation factor GTPase family. EF-G/EF-2 subfamily.

Its subcellular location is the cytoplasm. Its function is as follows. Catalyzes the GTP-dependent ribosomal translocation step during translation elongation. During this step, the ribosome changes from the pre-translocational (PRE) to the post-translocational (POST) state as the newly formed A-site-bound peptidyl-tRNA and P-site-bound deacylated tRNA move to the P and E sites, respectively. Catalyzes the coordinated movement of the two tRNA molecules, the mRNA and conformational changes in the ribosome. The sequence is that of Elongation factor G 2 from Shewanella sp. (strain MR-7).